The chain runs to 265 residues: Phosphate import ATP-binding protein PstB (265 aa).

Residues 11–260 (VSADEVKIAA…PRDPRTESYI (250 aa)) form the ABC transporter domain. Position 50–57 (50–57 (GPSGCGKS)) interacts with ATP.

It belongs to the ABC transporter superfamily. Phosphate importer (TC 3.A.1.7) family. The complex is composed of two ATP-binding proteins (PstB), two transmembrane proteins (PstC and PstA) and a solute-binding protein (PstS).

The protein resides in the cell inner membrane. The catalysed reaction is phosphate(out) + ATP + H2O = ADP + 2 phosphate(in) + H(+). Part of the ABC transporter complex PstSACB involved in phosphate import. Responsible for energy coupling to the transport system. This chain is Phosphate import ATP-binding protein PstB, found in Cereibacter sphaeroides (strain ATCC 17023 / DSM 158 / JCM 6121 / CCUG 31486 / LMG 2827 / NBRC 12203 / NCIMB 8253 / ATH 2.4.1.) (Rhodobacter sphaeroides).